The sequence spans 419 residues: S-adenosylmethionine synthase (419 aa).

ATP is bound at residue H14. Residue D16 coordinates Mg(2+). E42 serves as a coordination point for K(+). The L-methionine site is built by E55 and Q98. Positions Q98–R108 are flexible loop. ATP contacts are provided by residues D164–K166, K242–F243, D251, R257–K258, A274, and K278. An L-methionine-binding site is contributed by D251. K282 contributes to the L-methionine binding site.

It belongs to the AdoMet synthase family. In terms of assembly, homotetramer; dimer of dimers. Requires Mg(2+) as cofactor. The cofactor is K(+).

It localises to the cytoplasm. The enzyme catalyses L-methionine + ATP + H2O = S-adenosyl-L-methionine + phosphate + diphosphate. It functions in the pathway amino-acid biosynthesis; S-adenosyl-L-methionine biosynthesis; S-adenosyl-L-methionine from L-methionine: step 1/1. Its function is as follows. Catalyzes the formation of S-adenosylmethionine (AdoMet) from methionine and ATP. The overall synthetic reaction is composed of two sequential steps, AdoMet formation and the subsequent tripolyphosphate hydrolysis which occurs prior to release of AdoMet from the enzyme. This chain is S-adenosylmethionine synthase, found in Cytophaga hutchinsonii (strain ATCC 33406 / DSM 1761 / CIP 103989 / NBRC 15051 / NCIMB 9469 / D465).